The primary structure comprises 72 residues: Rubredoxin in uptake hydrogenase operon (72 aa).

The region spanning 19–70 (DAVLECKICWHRYDPAVGDEVWQILAGTPFAALPAHWRCPQCDGDREQFMVV) is the Rubredoxin-like domain. Positions 24, 27, 57, and 60 each coordinate Fe cation.

The protein belongs to the rubredoxin family. Fe(3+) is required as a cofactor.

In terms of biological role, could be an electron transport intermediate in hydrogen oxidation. The polypeptide is Rubredoxin in uptake hydrogenase operon (hupR) (Azotobacter chroococcum mcd 1).